We begin with the raw amino-acid sequence, 177 residues long: ATP synthase subunit delta (177 aa).

Belongs to the ATPase delta chain family. In terms of assembly, F-type ATPases have 2 components, F(1) - the catalytic core - and F(0) - the membrane proton channel. F(1) has five subunits: alpha(3), beta(3), gamma(1), delta(1), epsilon(1). F(0) has three main subunits: a(1), b(2) and c(10-14). The alpha and beta chains form an alternating ring which encloses part of the gamma chain. F(1) is attached to F(0) by a central stalk formed by the gamma and epsilon chains, while a peripheral stalk is formed by the delta and b chains.

Its subcellular location is the cell inner membrane. In terms of biological role, f(1)F(0) ATP synthase produces ATP from ADP in the presence of a proton or sodium gradient. F-type ATPases consist of two structural domains, F(1) containing the extramembraneous catalytic core and F(0) containing the membrane proton channel, linked together by a central stalk and a peripheral stalk. During catalysis, ATP synthesis in the catalytic domain of F(1) is coupled via a rotary mechanism of the central stalk subunits to proton translocation. This protein is part of the stalk that links CF(0) to CF(1). It either transmits conformational changes from CF(0) to CF(1) or is implicated in proton conduction. In Citrobacter koseri (strain ATCC BAA-895 / CDC 4225-83 / SGSC4696), this protein is ATP synthase subunit delta.